The sequence spans 195 residues: Calcineurin B homologous protein 1 (195 aa).

Glycine 2 carries the N-myristoyl glycine lipid modification. Positions 2 to 6 (GSRAS) match the Necessary for association with microtubule and interaction with GAPDH motif. 4 EF-hand domains span residues 26–61 (SQIT…AINP), 66–101 (IINA…KSKD), 110–145 (SRSN…MVGV), and 151–186 (QLGS…VDVE). Ca(2+) is bound by residues aspartate 123, aspartate 125, aspartate 127, lysine 129, and glutamate 134. The Nuclear export signal 1 signature appears at 138-147 (VLRMMVGVNI). Ca(2+) contacts are provided by aspartate 164, aspartate 166, aspartate 168, and glutamate 175. The Nuclear export signal 2 motif lies at 176-185 (FVKVLEKVDV).

This sequence belongs to the calcineurin regulatory subunit family. CHP subfamily. Monomer. Interacts with STK17B; the interaction occurs in a calcium-independent manner and induces the translocation of CHP1 from the Golgi to the nucleus. Interacts with GAPDH; the interaction is direct, occurs in a N-myristoylation-dependent manner and facilitates the ability of CHP1 to bind microtubules. Interacts with KIF1B (via the C-terminal end of the kinesin-motor domain); the interaction occurs in a calcium-dependent manner. Associates (via C-terminal domain) with microtubules; the association occurs with polymerized microtubules during the cell cycle in a myristoylation- and calcium-independent manner and is enhanced by GAPDH. Interacts with PPP3CA. Interacts with SLC9A1/NHE1 (via the cytoplasmic C-terminal domain); the interaction occurs at the plasma membrane in a calcium-dependent manner and at a domain that is critical for growth factor stimulation of the exchanger. Interacts with SLC9A3; increases SLC9A3 trafficking and activity at the plasma membrane. Post-translationally, phosphorylated; decreased phosphorylation is associated with an increase in SLC9A1/NHE1 Na(+)/H(+) exchange activity. Phosphorylation occurs in serum-dependent manner. The phosphorylation state may regulate the binding to SLC9A1/NHE1. Both N-myristoylation and calcium-mediated conformational changes are essential for its function in exocytic traffic. N-myristoylation is required for its association with microtubules and interaction with GAPDH, but not for the constitutive association to membranes.

It is found in the nucleus. It localises to the cytoplasm. Its subcellular location is the cytoskeleton. The protein resides in the endomembrane system. The protein localises to the endoplasmic reticulum-Golgi intermediate compartment. It is found in the endoplasmic reticulum. It localises to the cell membrane. Its subcellular location is the membrane. In terms of biological role, calcium-binding protein involved in different processes such as regulation of vesicular trafficking, plasma membrane Na(+)/H(+) exchanger and gene transcription. Involved in the constitutive exocytic membrane traffic. Mediates the association between microtubules and membrane-bound organelles of the endoplasmic reticulum and Golgi apparatus and is also required for the targeting and fusion of transcytotic vesicles (TCV) with the plasma membrane. Functions as an integral cofactor in cell pH regulation by controlling plasma membrane-type Na(+)/H(+) exchange activity. Affects the pH sensitivity of SLC9A1/NHE1 by increasing its sensitivity at acidic pH. Required for the stabilization and localization of SLC9A1/NHE1 at the plasma membrane. Inhibits serum- and GTPase-stimulated Na(+)/H(+) exchange. Plays a role as an inhibitor of ribosomal RNA transcription by repressing the nucleolar UBF1 transcriptional activity. May sequester UBF1 in the nucleoplasm and limit its translocation to the nucleolus. Associates to the ribosomal gene promoter. Acts as a negative regulator of the calcineurin/NFAT signaling pathway. Inhibits NFAT nuclear translocation and transcriptional activity by suppressing the calcium-dependent calcineurin phosphatase activity. Also negatively regulates the kinase activity of the apoptosis-induced kinase STK17B. Inhibits both STK17B auto- and substrate-phosphorylations in a calcium-dependent manner. The chain is Calcineurin B homologous protein 1 (CHP1) from Bos taurus (Bovine).